The chain runs to 371 residues: 3-isopropylmalate dehydrogenase (371 aa).

4 residues coordinate substrate: Arg-104, Arg-114, Arg-142, and Asp-232. Asp-232, Asp-256, and Asp-260 together coordinate Mg(2+). Position 290–302 (290–302 (GSAPDIAGQDKAN)) interacts with NAD(+).

It belongs to the isocitrate and isopropylmalate dehydrogenases family. LeuB type 1 subfamily. As to quaternary structure, homodimer. Requires Mg(2+) as cofactor. Mn(2+) is required as a cofactor.

The protein localises to the cytoplasm. It carries out the reaction (2R,3S)-3-isopropylmalate + NAD(+) = 4-methyl-2-oxopentanoate + CO2 + NADH. The protein operates within amino-acid biosynthesis; L-leucine biosynthesis; L-leucine from 3-methyl-2-oxobutanoate: step 3/4. Its function is as follows. Catalyzes the oxidation of 3-carboxy-2-hydroxy-4-methylpentanoate (3-isopropylmalate) to 3-carboxy-4-methyl-2-oxopentanoate. The product decarboxylates to 4-methyl-2 oxopentanoate. This is 3-isopropylmalate dehydrogenase from Synechococcus sp. (strain JA-2-3B'a(2-13)) (Cyanobacteria bacterium Yellowstone B-Prime).